The chain runs to 187 residues: Peptide deformylase 1 (187 aa).

Fe cation-binding residues include Cys107 and His149. The active site involves Glu150. Position 153 (His153) interacts with Fe cation.

The protein belongs to the polypeptide deformylase family. Fe(2+) is required as a cofactor.

The enzyme catalyses N-terminal N-formyl-L-methionyl-[peptide] + H2O = N-terminal L-methionyl-[peptide] + formate. Functionally, removes the formyl group from the N-terminal Met of newly synthesized proteins. Requires at least a dipeptide for an efficient rate of reaction. N-terminal L-methionine is a prerequisite for activity but the enzyme has broad specificity at other positions. The protein is Peptide deformylase 1 of Nostoc sp. (strain PCC 7120 / SAG 25.82 / UTEX 2576).